The primary structure comprises 419 residues: Alpha-galactosidase A (419 aa).

The N-terminal stretch at 1 to 31 (MKLLSRDTRLVCELALCPLALVFWSILGVRA) is a signal peptide. 2 disulfides stabilise this stretch: C52-C94 and C56-C63. N-linked (GlcNAc...) asparagine glycosylation occurs at N139. C142 and C172 form a disulfide bridge. The active-site Nucleophile is the D170. Residue Y186 is modified to Phosphotyrosine. N-linked (GlcNAc...) asparagine glycosylation is present at N192. C202 and C223 form a disulfide bridge. Residue 203 to 207 (EWPLY) participates in substrate binding. N215 carries N-linked (GlcNAc...) asparagine glycosylation. D231 (proton donor) is an active-site residue. C378 and C382 are disulfide-bonded.

It belongs to the glycosyl hydrolase 27 family. As to quaternary structure, homodimer.

The protein resides in the lysosome. The enzyme catalyses Hydrolysis of terminal, non-reducing alpha-D-galactose residues in alpha-D-galactosides, including galactose oligosaccharides, galactomannans and galactolipids.. The catalysed reaction is a globoside Gb3Cer (d18:1(4E)) + H2O = a beta-D-Gal-(1-&gt;4)-beta-D-Glc-(1&lt;-&gt;1)-Cer(d18:1(4E)) + D-galactose. It catalyses the reaction a globoside Gb3Cer + H2O = a beta-D-galactosyl-(1-&gt;4)-beta-D-glucosyl-(1&lt;-&gt;1)-ceramide + D-galactose. With respect to regulation, galactosylgalactosylglucosylceramidase activity is stimulated by saposin B and ammonium chloride. Catalyzes the hydrolysis of glycosphingolipids and participates in their degradation in the lysosome. In Mus musculus (Mouse), this protein is Alpha-galactosidase A.